The following is a 364-amino-acid chain: Ribosomal RNA large subunit methyltransferase M (364 aa).

S-adenosyl-L-methionine contacts are provided by residues Ser-198, 231-234 (APGG), Asp-250, Asp-270, and Asp-286. The Proton acceptor role is filled by Lys-315.

This sequence belongs to the class I-like SAM-binding methyltransferase superfamily. RNA methyltransferase RlmE family. RlmM subfamily. Monomer.

It localises to the cytoplasm. The enzyme catalyses cytidine(2498) in 23S rRNA + S-adenosyl-L-methionine = 2'-O-methylcytidine(2498) in 23S rRNA + S-adenosyl-L-homocysteine + H(+). Functionally, catalyzes the 2'-O-methylation at nucleotide C2498 in 23S rRNA. The polypeptide is Ribosomal RNA large subunit methyltransferase M (Azoarcus sp. (strain BH72)).